A 1156-amino-acid polypeptide reads, in one-letter code: Mastermind-like protein 2 (1156 aa).

A disordered region spans residues 81 to 165 (QHGQGARKAG…PPASTPGDQR (85 aa)). The segment covering 113 to 122 (PAASQAAATA) has biased composition (low complexity). Residues 153 to 165 (EQQPPASTPGDQR) are compositionally biased toward polar residues. Serine 175 bears the Phosphoserine mark. Disordered stretches follow at residues 340-359 (FNID…SLPM), 369-506 (SPGL…GSGQ), 531-630 (QQKP…QQQQ), 658-680 (QQQQ…QPLL), 705-743 (YQVS…GYMN), 784-820 (IAPQ…YSGG), and 1059-1100 (LPNL…FQGT). 4 stretches are compositionally biased toward polar residues: residues 344–354 (LGQQSQRSTPR), 371–380 (GLTQGPSGSP), 393–419 (MANS…TGSG), and 428–437 (QEVSHAQQLK). A compositionally biased stretch (low complexity) spans 440-470 (AANRQQHARMQQHQQQHQPTNWSALPSSAGP). 3 stretches are compositionally biased toward polar residues: residues 484–496 (SFGQ…QSSP), 532–543 (QKPQDLSRSFIN), and 563–587 (NSDQ…LHYT). Low complexity predominate over residues 588 to 630 (QQQQQQQQQQQQQQQQQQQQQQQQQQQQQQQQQQSSISAQQQQ). Composition is skewed to low complexity over residues 706–725 (QVSQ…NTGP) and 733–743 (SNPNTGSGYMN). The span at 807–820 (NVGNMQPTAQYSGG) shows a compositional bias: polar residues.

This sequence belongs to the mastermind family. In terms of assembly, interacts through its N-terminal region with the ankyrin repeat region of the Notch proteins NOTCH1, NOTCH2, NOTCH3 and NOTCH4. Forms a DNA-binding complex with Notch proteins and RBPSUH/RBP-J kappa. Widely expressed with high levels detected in placenta, salivary gland and skeletal muscle.

The protein resides in the nucleus speckle. Functionally, acts as a transcriptional coactivator for NOTCH proteins. Has been shown to amplify NOTCH-induced transcription of HES1. Potentiates activation by NOTCH3 and NOTCH4 more efficiently than MAML1 or MAML3. The protein is Mastermind-like protein 2 (MAML2) of Homo sapiens (Human).